Here is a 283-residue protein sequence, read N- to C-terminus: Formamidopyrimidine-DNA glycosylase (283 aa).

Pro2 serves as the catalytic Schiff-base intermediate with DNA. The active-site Proton donor is Glu3. Residue Lys58 is the Proton donor; for beta-elimination activity of the active site. 3 residues coordinate DNA: His100, Arg119, and Arg162. An FPG-type zinc finger spans residues 247–283 (RVYGREGLPCVTPGCSGTVGRIVQSGRSSFHCPLCQR). The active-site Proton donor; for delta-elimination activity is Arg273.

Belongs to the FPG family. Monomer. Zn(2+) serves as cofactor.

The catalysed reaction is Hydrolysis of DNA containing ring-opened 7-methylguanine residues, releasing 2,6-diamino-4-hydroxy-5-(N-methyl)formamidopyrimidine.. The enzyme catalyses 2'-deoxyribonucleotide-(2'-deoxyribose 5'-phosphate)-2'-deoxyribonucleotide-DNA = a 3'-end 2'-deoxyribonucleotide-(2,3-dehydro-2,3-deoxyribose 5'-phosphate)-DNA + a 5'-end 5'-phospho-2'-deoxyribonucleoside-DNA + H(+). In terms of biological role, involved in base excision repair of DNA damaged by oxidation or by mutagenic agents. Acts as a DNA glycosylase that recognizes and removes damaged bases. Has a preference for oxidized purines, such as 7,8-dihydro-8-oxoguanine (8-oxoG). Has AP (apurinic/apyrimidinic) lyase activity and introduces nicks in the DNA strand. Cleaves the DNA backbone by beta-delta elimination to generate a single-strand break at the site of the removed base with both 3'- and 5'-phosphates. This is Formamidopyrimidine-DNA glycosylase from Cereibacter sphaeroides (strain KD131 / KCTC 12085) (Rhodobacter sphaeroides).